Reading from the N-terminus, the 293-residue chain is Phosphate import ATP-binding protein PstB (293 aa).

The region spanning 46–288 is the ABC transporter domain; the sequence is MTCRKVDVHY…PGHQLTEDYI (243 aa). 78–85 is a binding site for ATP; the sequence is GPSGCGKS.

This sequence belongs to the ABC transporter superfamily. Phosphate importer (TC 3.A.1.7) family. As to quaternary structure, the complex is composed of two ATP-binding proteins (PstB), two transmembrane proteins (PstC and PstA) and a solute-binding protein (PstS).

It is found in the cell inner membrane. The enzyme catalyses phosphate(out) + ATP + H2O = ADP + 2 phosphate(in) + H(+). Part of the ABC transporter complex PstSACB involved in phosphate import. Responsible for energy coupling to the transport system. This is Phosphate import ATP-binding protein PstB from Desulfotalea psychrophila (strain LSv54 / DSM 12343).